The chain runs to 368 residues: 3-dehydroquinate synthase (368 aa).

The protein belongs to the archaeal-type DHQ synthase family.

It carries out the reaction 2-amino-2,3,7-trideoxy-D-lyxo-hept-6-ulosonate + NAD(+) + H2O = 3-dehydroquinate + NH4(+) + NADH + H(+). Catalyzes the oxidative deamination and cyclization of 2-amino-3,7-dideoxy-D-threo-hept-6-ulosonic acid (ADH) to yield 3-dehydroquinate (DHQ), which is fed into the canonical shikimic pathway of aromatic amino acid biosynthesis. The chain is 3-dehydroquinate synthase from Methanobrevibacter smithii (strain ATCC 35061 / DSM 861 / OCM 144 / PS).